The sequence spans 331 residues: Adenosine deaminase (331 aa).

The Zn(2+) site is built by histidine 12 and histidine 14. Substrate contacts are provided by histidine 14, aspartate 16, and glycine 170. Histidine 197 provides a ligand contact to Zn(2+). Glutamate 200 (proton donor) is an active-site residue. Residue aspartate 278 participates in Zn(2+) binding. Aspartate 279 contacts substrate.

It belongs to the metallo-dependent hydrolases superfamily. Adenosine and AMP deaminases family. Adenosine deaminase subfamily. The cofactor is Zn(2+).

It catalyses the reaction adenosine + H2O + H(+) = inosine + NH4(+). The enzyme catalyses 2'-deoxyadenosine + H2O + H(+) = 2'-deoxyinosine + NH4(+). Functionally, catalyzes the hydrolytic deamination of adenosine and 2-deoxyadenosine. The polypeptide is Adenosine deaminase (Shewanella sp. (strain MR-4)).